The chain runs to 275 residues: Putative phosphoenolpyruvate synthase regulatory protein (275 aa).

An ADP-binding site is contributed by 157 to 164 (GVSRCGKT).

The protein belongs to the pyruvate, phosphate/water dikinase regulatory protein family. PSRP subfamily.

The enzyme catalyses [pyruvate, water dikinase] + ADP = [pyruvate, water dikinase]-phosphate + AMP + H(+). It catalyses the reaction [pyruvate, water dikinase]-phosphate + phosphate + H(+) = [pyruvate, water dikinase] + diphosphate. Functionally, bifunctional serine/threonine kinase and phosphorylase involved in the regulation of the phosphoenolpyruvate synthase (PEPS) by catalyzing its phosphorylation/dephosphorylation. This is Putative phosphoenolpyruvate synthase regulatory protein from Bordetella bronchiseptica (strain ATCC BAA-588 / NCTC 13252 / RB50) (Alcaligenes bronchisepticus).